Here is an 867-residue protein sequence, read N- to C-terminus: Putative ribosome biogenesis ATPase nvl (867 aa).

A disordered region spans residues 70–203 (LSSCESSENE…NNNNGNNKDN (134 aa)). Residues 110 to 122 (EQLTSQYKQNIKN) are compositionally biased toward polar residues. 3 stretches are compositionally biased toward low complexity: residues 123-132 (TPPTTTTTTP), 141-172 (IPSN…TPNS), and 180-203 (NSSN…NKDN). 257–264 (GPSGCGKT) lines the ATP pocket. The disordered stretch occupies residues 351–370 (SSNNSTNEPNEQTEQQQQQQ). 607 to 614 (GPPGCGKT) lines the ATP pocket. Basic and acidic residues predominate over residues 834–843 (DINKSRDKKP). A disordered region spans residues 834–855 (DINKSRDKKPNNSNNIPITNNI). Residues 844-855 (NNSNNIPITNNI) show a composition bias toward low complexity.

Belongs to the AAA ATPase family.

The protein resides in the nucleus. The protein localises to the nucleolus. Its subcellular location is the nucleoplasm. Involved in ribosome biogenesis. The sequence is that of Putative ribosome biogenesis ATPase nvl (nvl) from Dictyostelium discoideum (Social amoeba).